Consider the following 102-residue polypeptide: Phosphoribosyl-ATP pyrophosphatase (102 aa).

This sequence belongs to the PRA-PH family.

It is found in the cytoplasm. The catalysed reaction is 1-(5-phospho-beta-D-ribosyl)-ATP + H2O = 1-(5-phospho-beta-D-ribosyl)-5'-AMP + diphosphate + H(+). It participates in amino-acid biosynthesis; L-histidine biosynthesis; L-histidine from 5-phospho-alpha-D-ribose 1-diphosphate: step 2/9. In Ignicoccus hospitalis (strain KIN4/I / DSM 18386 / JCM 14125), this protein is Phosphoribosyl-ATP pyrophosphatase.